A 1292-amino-acid chain; its full sequence is DNA-directed RNA polymerase subunit beta' (1292 aa).

4 residues coordinate Zn(2+): cysteine 70, cysteine 72, cysteine 85, and cysteine 88. Mg(2+) contacts are provided by aspartate 532, aspartate 534, and aspartate 536. The Zn(2+) site is built by cysteine 911, cysteine 987, cysteine 994, and cysteine 997.

It belongs to the RNA polymerase beta' chain family. In terms of assembly, the RNAP catalytic core consists of 2 alpha, 1 beta, 1 beta' and 1 omega subunit. When a sigma factor is associated with the core the holoenzyme is formed, which can initiate transcription. The cofactor is Mg(2+). Zn(2+) is required as a cofactor.

The enzyme catalyses RNA(n) + a ribonucleoside 5'-triphosphate = RNA(n+1) + diphosphate. Its function is as follows. DNA-dependent RNA polymerase catalyzes the transcription of DNA into RNA using the four ribonucleoside triphosphates as substrates. This is DNA-directed RNA polymerase subunit beta' from Mycoplasma genitalium (strain ATCC 33530 / DSM 19775 / NCTC 10195 / G37) (Mycoplasmoides genitalium).